Here is a 586-residue protein sequence, read N- to C-terminus: Dual specificity tyrosine-phosphorylation-regulated kinase 3 (586 aa).

A compositionally biased stretch (basic and acidic residues) spans 1-13; that stretch reads MGGAARERGRKDA. A disordered region spans residues 1–187; that stretch reads MGGAARERGR…QGVIGGPNNG (187 aa). One can recognise a Protein kinase domain in the interval 208–521; the sequence is YEVLKIIGKG…PAQALRHPWI (314 aa). Residues 214-222, Lys-237, and 287-290 each bind ATP; these read IGKGSFGQV and FELL. Asp-334 acts as the Proton acceptor in catalysis. Residue Tyr-368 is modified to Phosphotyrosine. A Nuclear localization signal motif is present at residues 467–480; sequence RSRRGKKRGPPGSK.

This sequence belongs to the protein kinase superfamily. CMGC Ser/Thr protein kinase family. MNB/DYRK subfamily. As to quaternary structure, interacts with SIRT1. Mg(2+) is required as a cofactor. Post-translationally, protein kinase activity is activated following autophosphorylation at Tyr-368. Ubiquitinated at anaphase by the anaphase-promoting complex (APC/C), leading to its degradation by the proteasome. In terms of tissue distribution, expressed predominantly in testis. Expressed in late pachytene spermatocytes.

It localises to the nucleus. It is found in the cytoplasm. The protein resides in the nucleus speckle. Its subcellular location is the cytoplasmic granule. The protein localises to the cytoskeleton. It localises to the microtubule organizing center. It is found in the centrosome. It carries out the reaction L-seryl-[protein] + ATP = O-phospho-L-seryl-[protein] + ADP + H(+). It catalyses the reaction L-threonyl-[protein] + ATP = O-phospho-L-threonyl-[protein] + ADP + H(+). The catalysed reaction is L-tyrosyl-[protein] + ATP = O-phospho-L-tyrosyl-[protein] + ADP + H(+). Protein kinase activity is activated following autophosphorylation at Tyr-368. Functionally, dual-specificity protein kinase that promotes disassembly of several types of membraneless organelles during mitosis, such as stress granules, nuclear speckles and pericentriolar material. Dual-specificity tyrosine-regulated kinases (DYRKs) autophosphorylate a critical tyrosine residue in their activation loop and phosphorylate their substrate on serine and threonine residues. Acts as a central dissolvase of membraneless organelles during the G2-to-M transition, after the nuclear-envelope breakdown: acts by mediating phosphorylation of multiple serine and threonine residues in unstructured domains of proteins, such as SRRM1 and PCM1. Does not mediate disassembly of all membraneless organelles: disassembly of P-body and nucleolus is not regulated by DYRK3. Dissolution of membraneless organelles at the onset of mitosis is also required to release mitotic regulators, such as ZNF207, from liquid-unmixed organelles where they are sequestered and keep them dissolved during mitosis. Regulates mTORC1 by mediating the dissolution of stress granules: during stressful conditions, DYRK3 partitions from the cytosol to the stress granule, together with mTORC1 components, which prevents mTORC1 signaling. When stress signals are gone, the kinase activity of DYRK3 is required for the dissolution of stress granule and mTORC1 relocation to the cytosol: acts by mediating the phosphorylation of the mTORC1 inhibitor AKT1S1, allowing full reactivation of mTORC1 signaling. Also acts as a negative regulator of EPO-dependent erythropoiesis: may place an upper limit on red cell production during stress erythropoiesis. Inhibits cell death due to cytokine withdrawal in hematopoietic progenitor cells. Promotes cell survival upon genotoxic stress through phosphorylation of SIRT1: this in turn inhibits p53/TP53 activity and apoptosis. This chain is Dual specificity tyrosine-phosphorylation-regulated kinase 3, found in Rattus norvegicus (Rat).